Consider the following 365-residue polypeptide: MAQNSLRLVEDKAVDKSKALDAALSQIERAFGKGSIMRLGANEQVVEIETVPTGSLGLDIALGVGGLPRGRIIEIYGPESSGKTTLALHTVAEAQKKGGICAFVDAEHALDPVYARKLGVDLENLLISQPDTGEQALEICDTLVRSGAIDVLVVDSVAALTPRAEIEGEMGDSLPGLQARLMSQALRKLTASISRSNTMVIFINQIRMKIGVMFGSPETTTGGNALKFYASVRLDIRRIGSVKDRDEVVGNQTRVKVVKNKLAPPFKVVEFDIMYGEGVSKTGELVDLGVKAGVVEKSGAWFSYNSQRLGQGRENAKLFLRDNPDTAREIELALRQNAGLIAEKFLENGGSEGGDDGFEDEAGAM.

77–84 (GPESSGKT) is a binding site for ATP.

The protein belongs to the RecA family.

The protein resides in the cytoplasm. Its function is as follows. Can catalyze the hydrolysis of ATP in the presence of single-stranded DNA, the ATP-dependent uptake of single-stranded DNA by duplex DNA, and the ATP-dependent hybridization of homologous single-stranded DNAs. It interacts with LexA causing its activation and leading to its autocatalytic cleavage. In Mesorhizobium japonicum (strain LMG 29417 / CECT 9101 / MAFF 303099) (Mesorhizobium loti (strain MAFF 303099)), this protein is Protein RecA.